Consider the following 550-residue polypeptide: Dihydroxy-acid dehydratase (550 aa).

A Mg(2+)-binding site is contributed by Asp78. Cys119 contributes to the [2Fe-2S] cluster binding site. Mg(2+) contacts are provided by Asp120 and Lys121. Lys121 is modified (N6-carboxylysine). Position 191 (Cys191) interacts with [2Fe-2S] cluster. Position 440 (Glu440) interacts with Mg(2+). Residue Ser466 is the Proton acceptor of the active site.

Belongs to the IlvD/Edd family. In terms of assembly, homodimer. It depends on [2Fe-2S] cluster as a cofactor. Mg(2+) serves as cofactor.

It catalyses the reaction (2R)-2,3-dihydroxy-3-methylbutanoate = 3-methyl-2-oxobutanoate + H2O. It carries out the reaction (2R,3R)-2,3-dihydroxy-3-methylpentanoate = (S)-3-methyl-2-oxopentanoate + H2O. It functions in the pathway amino-acid biosynthesis; L-isoleucine biosynthesis; L-isoleucine from 2-oxobutanoate: step 3/4. Its pathway is amino-acid biosynthesis; L-valine biosynthesis; L-valine from pyruvate: step 3/4. Functions in the biosynthesis of branched-chain amino acids. Catalyzes the dehydration of (2R,3R)-2,3-dihydroxy-3-methylpentanoate (2,3-dihydroxy-3-methylvalerate) into 2-oxo-3-methylpentanoate (2-oxo-3-methylvalerate) and of (2R)-2,3-dihydroxy-3-methylbutanoate (2,3-dihydroxyisovalerate) into 2-oxo-3-methylbutanoate (2-oxoisovalerate), the penultimate precursor to L-isoleucine and L-valine, respectively. This is Dihydroxy-acid dehydratase from Methanococcus maripaludis (strain C7 / ATCC BAA-1331).